Reading from the N-terminus, the 701-residue chain is E3 ubiquitin-protein ligase RNF19B (701 aa).

Residues 1-97 (MGSEKDSESP…PAEPLSTSQA (97 aa)) form a disordered region. Residues 1-304 (MGSEKDSESP…VCGCEFCWLC (304 aa)) are required for ubiquitin ligase activity and for protection against staurosporin-induced cell death. Over residues 57 to 72 (QQLHQQQQIQQQQLLQ) the composition is skewed to low complexity. The tract at residues 103–323 (ELLECPLCLV…LSPSGCTFWG (221 aa)) is TRIAD supradomain. Residues Cys-107, Cys-110, Cys-130, Cys-133, Cys-194, Cys-199, Cys-216, Cys-221, Cys-226, Cys-229, His-234, Cys-239, Cys-273, and Cys-276 each coordinate Zn(2+). An RING-type 1 zinc finger spans residues 107 to 156 (CPLCLVRQPAEQLPELQGCSHRSCLCCLRQYLRIEITESRVQLSCPECAE). The segment at 174-239 (EKYEEFLLRR…KQAWHPNQTC (66 aa)) adopts an IBR-type zinc-finger fold. An RING-type 2; atypical zinc finger spans residues 273–304 (CPRCGAYIIKMNDGSCNHMTCAVCGCEFCWLC). Residue Cys-288 is part of the active site. Cys-293, Cys-296, Cys-301, Cys-304, His-312, and Cys-319 together coordinate Zn(2+). The next 2 helical transmembrane spans lie at 340–360 (LIGA…AMVI) and 396–416 (IITA…IMLA). Disordered stretches follow at residues 472–495 (LEGA…PGGL) and 658–677 (AELT…HGAP).

It belongs to the RBR family. RNF19 subfamily. As to quaternary structure, interacts with UBE2L3, UBE2L6 and UCKL1.

The protein localises to the cytoplasmic granule membrane. The protein resides in the endoplasmic reticulum membrane. It carries out the reaction [E2 ubiquitin-conjugating enzyme]-S-ubiquitinyl-L-cysteine + [acceptor protein]-L-lysine = [E2 ubiquitin-conjugating enzyme]-L-cysteine + [acceptor protein]-N(6)-ubiquitinyl-L-lysine.. The protein operates within protein modification; protein ubiquitination. E3 ubiquitin-protein ligase which accepts ubiquitin from E2 ubiquitin-conjugating enzymes UBE2L3 and UBE2L6 in the form of a thioester and then directly transfers the ubiquitin to targeted substrates, such as UCKL1. Involved in the cytolytic activity of natural killer cells and cytotoxic T-cells. Protects against staurosporin-induced cell death. This chain is E3 ubiquitin-protein ligase RNF19B (rnf19b), found in Danio rerio (Zebrafish).